Reading from the N-terminus, the 295-residue chain is MSKIVGSDRVKRGMAEMQKGGVIMDVVNAEQAKIAEEAGAVAVMALERVPSDIRAAGGVARSANPKIVEEVMNAVSIPVMAKARIGHITEARVLEAMGVDYIDESEVLTPADEEYHLRKDQFTVPFVCGCRNLGEAARRIGEGAAMLRTKGEPGTGNIVEAVRHMRKVNSEVSRLVVMNDDEIMTYAKELGAPYEVLKQIKDHGRLPVVNFAAGGVATPQDAALMMELGADGVFVGSGIFKSEDPEKFAKAIVQATTHYQDYELIGKLASELGTAMKGLDINQISLEERMQERGW.

Asp25 provides a ligand contact to D-ribose 5-phosphate. Residue Lys82 is the Schiff-base intermediate with D-ribose 5-phosphate of the active site. Gly154 contacts D-ribose 5-phosphate. Position 166 (Arg166) interacts with D-glyceraldehyde 3-phosphate. Residues Gly215 and 236–237 (GS) contribute to the D-ribose 5-phosphate site.

Belongs to the PdxS/SNZ family. In terms of assembly, in the presence of PdxT, forms a dodecamer of heterodimers.

It catalyses the reaction aldehydo-D-ribose 5-phosphate + D-glyceraldehyde 3-phosphate + L-glutamine = pyridoxal 5'-phosphate + L-glutamate + phosphate + 3 H2O + H(+). It participates in cofactor biosynthesis; pyridoxal 5'-phosphate biosynthesis. Catalyzes the formation of pyridoxal 5'-phosphate from ribose 5-phosphate (RBP), glyceraldehyde 3-phosphate (G3P) and ammonia. The ammonia is provided by the PdxT subunit. Can also use ribulose 5-phosphate and dihydroxyacetone phosphate as substrates, resulting from enzyme-catalyzed isomerization of RBP and G3P, respectively. This Staphylococcus haemolyticus (strain JCSC1435) protein is Pyridoxal 5'-phosphate synthase subunit PdxS.